The following is a 131-amino-acid chain: Small ribosomal subunit protein uS8 (131 aa).

The protein belongs to the universal ribosomal protein uS8 family. Part of the 30S ribosomal subunit. Contacts proteins S5 and S12.

One of the primary rRNA binding proteins, it binds directly to 16S rRNA central domain where it helps coordinate assembly of the platform of the 30S subunit. The chain is Small ribosomal subunit protein uS8 from Campylobacter jejuni (strain RM1221).